A 269-amino-acid polypeptide reads, in one-letter code: Formamidopyrimidine-DNA glycosylase (269 aa).

The Schiff-base intermediate with DNA role is filled by proline 2. Catalysis depends on glutamate 3, which acts as the Proton donor. The active-site Proton donor; for beta-elimination activity is lysine 57. Histidine 90, arginine 109, and lysine 150 together coordinate DNA. The FPG-type zinc-finger motif lies at 235–269 (QVYGRKGEPCRVCGTPIVATKHAQRATFYCRHCQK). Catalysis depends on arginine 259, which acts as the Proton donor; for delta-elimination activity.

It belongs to the FPG family. As to quaternary structure, monomer. It depends on Zn(2+) as a cofactor.

The catalysed reaction is Hydrolysis of DNA containing ring-opened 7-methylguanine residues, releasing 2,6-diamino-4-hydroxy-5-(N-methyl)formamidopyrimidine.. It catalyses the reaction 2'-deoxyribonucleotide-(2'-deoxyribose 5'-phosphate)-2'-deoxyribonucleotide-DNA = a 3'-end 2'-deoxyribonucleotide-(2,3-dehydro-2,3-deoxyribose 5'-phosphate)-DNA + a 5'-end 5'-phospho-2'-deoxyribonucleoside-DNA + H(+). Involved in base excision repair of DNA damaged by oxidation or by mutagenic agents. Acts as a DNA glycosylase that recognizes and removes damaged bases. Has a preference for oxidized purines, such as 7,8-dihydro-8-oxoguanine (8-oxoG). Has AP (apurinic/apyrimidinic) lyase activity and introduces nicks in the DNA strand. Cleaves the DNA backbone by beta-delta elimination to generate a single-strand break at the site of the removed base with both 3'- and 5'-phosphates. The chain is Formamidopyrimidine-DNA glycosylase from Salmonella dublin (strain CT_02021853).